The following is a 183-amino-acid chain: dCTP deaminase (183 aa).

DCTP-binding positions include 106–111 (KSTYAR), 130–132 (TLE), Q151, Y165, and Q175. E132 acts as the Proton donor/acceptor in catalysis.

It belongs to the dCTP deaminase family. As to quaternary structure, homotrimer.

The enzyme catalyses dCTP + H2O + H(+) = dUTP + NH4(+). It functions in the pathway pyrimidine metabolism; dUMP biosynthesis; dUMP from dCTP (dUTP route): step 1/2. Catalyzes the deamination of dCTP to dUTP. The polypeptide is dCTP deaminase (Acidobacterium capsulatum (strain ATCC 51196 / DSM 11244 / BCRC 80197 / JCM 7670 / NBRC 15755 / NCIMB 13165 / 161)).